The sequence spans 231 residues: Red fluorescent protein eqFP611 (231 aa).

Residues 63–65 (MYG) constitute a cross-link (2-iminomethyl-5-imidazolinone (Met-Gly)). Tyr64 is modified ((E)-2,3-didehydrotyrosine).

Belongs to the GFP family. In terms of assembly, monomer. Post-translationally, contains a chromophore consisting of modified amino acid residues. The chromophore is formed by autocatalytic backbone condensation between Xaa-N and Gly-(N+2), oxidation of Tyr-(N+1) to didehydrotyrosine, and formation of a double bond to the alpha-amino nitrogen of residue Xaa-N. Maturation of the chromophore requires nothing other than molecular oxygen.

Functionally, pigment protein. The protein is Red fluorescent protein eqFP611 of Entacmaea quadricolor (Bubble-tip anemone).